The chain runs to 236 residues: Cytochrome c biogenesis ATP-binding export protein CcmA (236 aa).

The 222-residue stretch at 14-235 (LEATGLQVAR…SAGDRVTGTE (222 aa)) folds into the ABC transporter domain. 46 to 53 (GANGSGKT) is a binding site for ATP.

The protein belongs to the ABC transporter superfamily. CcmA exporter (TC 3.A.1.107) family. In terms of assembly, the complex is composed of two ATP-binding proteins (CcmA) and two transmembrane proteins (CcmB).

The protein localises to the cell inner membrane. It catalyses the reaction heme b(in) + ATP + H2O = heme b(out) + ADP + phosphate + H(+). In terms of biological role, part of the ABC transporter complex CcmAB involved in the biogenesis of c-type cytochromes; once thought to export heme, this seems not to be the case, but its exact role is uncertain. Responsible for energy coupling to the transport system. In Alkalilimnicola ehrlichii (strain ATCC BAA-1101 / DSM 17681 / MLHE-1), this protein is Cytochrome c biogenesis ATP-binding export protein CcmA.